The sequence spans 89 residues: Neurotoxin beta-KTx 12 (89 aa).

A signal peptide spans 1-20 (MKQYIFFLALIVLVSTFAEA). Residues 21 to 39 (GKKTEILDKVKKVFSKAKD) constitute a propeptide that is removed on maturation. The BetaSPN-type CS-alpha/beta domain occupies 53-89 (ELGCPFIDKWCEDHCESKKLVGKCENFDCSCVKLGGK). Cystine bridges form between Cys-56-Cys-76, Cys-63-Cys-81, and Cys-67-Cys-83.

Belongs to the long chain scorpion toxin family. Class 2 subfamily. In terms of tissue distribution, expressed by the venom gland.

It is found in the secreted. Its function is as follows. Inhibits voltage-gated potassium channel. The chain is Neurotoxin beta-KTx 12 from Lychas mucronatus (Chinese swimming scorpion).